The following is a 255-amino-acid chain: Type III pantothenate kinase (255 aa).

6–13 contacts ATP; that stretch reads DIGNSNIV. Substrate is bound by residues Tyr100 and 107-110; that span reads GSDR. Asp109 acts as the Proton acceptor in catalysis. Position 129 (Asp129) interacts with K(+). Thr132 contacts ATP. Substrate is bound at residue Thr184.

The protein belongs to the type III pantothenate kinase family. As to quaternary structure, homodimer. NH4(+) serves as cofactor. K(+) is required as a cofactor.

The protein resides in the cytoplasm. The catalysed reaction is (R)-pantothenate + ATP = (R)-4'-phosphopantothenate + ADP + H(+). It participates in cofactor biosynthesis; coenzyme A biosynthesis; CoA from (R)-pantothenate: step 1/5. Catalyzes the phosphorylation of pantothenate (Pan), the first step in CoA biosynthesis. The chain is Type III pantothenate kinase from Brevibacillus brevis (strain 47 / JCM 6285 / NBRC 100599).